The primary structure comprises 374 residues: MSVPAFIDISEEDQAAELRAYLKSKGAEISEENSEGGLHVDLAQIIEACDVCLKEDDKDVESVMNSVVSLLLILEPDKQEALIESLCEKLVKFREGERPSLRLQLLSNLFHGMDKNTPVRYTVYCSLIKVAASCGAIQYIPTELDQVRKWISDWNLTTEKKHTLLRLLYEALVDCKKSDAASKVMVELLGSYTEDNASQARVDAHRCIVRALKDPNAFLFDHLLTLKPVKFLEGELIHDLLTIFVSAKLASYVKFYQNNKDFIDSLGLLHEQNMAKMRLLTFMGMAVENKEISFDTMQQELQIGADDVEAFVIDAVRTKMVYCKIDQTQRKVVVSHSTHRTFGKQQWQQLYDTLNAWKQNLNKVKNSLLSLSDT.

Ser2 bears the N-acetylserine mark. A phosphoserine mark is found at Ser2 and Ser152. Residues 180-339 (AASKVMVELL…RKVVVSHSTH (160 aa)) enclose the PCI domain. N6-acetyllysine is present on Lys254. The tract at residues 344-374 (KQQWQQLYDTLNAWKQNLNKVKNSLLSLSDT) is interaction with HSV-1 and HSV-2. Position 367 is a phosphoserine (Ser367).

Component of the eukaryotic translation initiation factor 3 (eIF-3) complex, which is composed of 13 subunits: EIF3A, EIF3B, EIF3C, EIF3D, EIF3E, EIF3F, EIF3G, EIF3H, EIF3I, EIF3J, EIF3K, EIF3L and EIF3M. The eIF-3 complex appears to include 3 stable modules: module A is composed of EIF3A, EIF3B, EIF3G and EIF3I; module B is composed of EIF3F, EIF3H, and EIF3M; and module C is composed of EIF3C, EIF3D, EIF3E, EIF3K and EIF3L. EIF3C of module C binds EIF3B of module A and EIF3H of module B, thereby linking the three modules. EIF3J is a labile subunit that binds to the eIF-3 complex via EIF3B. The eIF-3 complex interacts with RPS6KB1 under conditions of nutrient depletion. Mitogenic stimulation leads to binding and activation of a complex composed of MTOR and RPTOR, leading to phosphorylation and release of RPS6KB1 and binding of EIF4B to eIF-3. Broadly expressed.

It is found in the cytoplasm. In terms of biological role, component of the eukaryotic translation initiation factor 3 (eIF-3) complex, which is required for several steps in the initiation of protein synthesis. The eIF-3 complex associates with the 40S ribosome and facilitates the recruitment of eIF-1, eIF-1A, eIF-2:GTP:methionyl-tRNAi and eIF-5 to form the 43S pre-initiation complex (43S PIC). The eIF-3 complex stimulates mRNA recruitment to the 43S PIC and scanning of the mRNA for AUG recognition. The eIF-3 complex is also required for disassembly and recycling of post-termination ribosomal complexes and subsequently prevents premature joining of the 40S and 60S ribosomal subunits prior to initiation. The eIF-3 complex specifically targets and initiates translation of a subset of mRNAs involved in cell proliferation, including cell cycling, differentiation and apoptosis, and uses different modes of RNA stem-loop binding to exert either translational activation or repression. (Microbial infection) May favor virus entry in case of infection with herpes simplex virus 1 (HSV1) or herpes simplex virus 2 (HSV2). This is Eukaryotic translation initiation factor 3 subunit M from Homo sapiens (Human).